Here is a 332-residue protein sequence, read N- to C-terminus: Putative symporter YfeH (332 aa).

This sequence belongs to the bile acid:sodium symporter (BASS) (TC 2.A.28) family.

The protein is Putative symporter YfeH (yfeH) of Escherichia coli (strain K12).